The chain runs to 243 residues: BTB/POZ domain-containing protein At4g08455 (243 aa).

The stretch at 19 to 51 (KECYVEAGETEEELKREIDDLKAKVAFLRLSSS) forms a coiled coil. A BTB domain is found at 64–136 (TDVVLIASED…LYTAEACLDE (73 aa)).

In terms of assembly, interacts with CUL3A and CUL3B.

Its pathway is protein modification; protein ubiquitination. In terms of biological role, may act as a substrate-specific adapter of an E3 ubiquitin-protein ligase complex (CUL3-RBX1-BTB) which mediates the ubiquitination and subsequent proteasomal degradation of target proteins. This is BTB/POZ domain-containing protein At4g08455 from Arabidopsis thaliana (Mouse-ear cress).